Reading from the N-terminus, the 362-residue chain is 3-isopropylmalate dehydrogenase (362 aa).

Substrate-binding residues include Arg-97, Arg-107, Arg-135, and Asp-225. Mg(2+) contacts are provided by Asp-225, Asp-249, and Asp-253. 283-295 (GSAPDIAHKNLAN) serves as a coordination point for NAD(+).

Belongs to the isocitrate and isopropylmalate dehydrogenases family. LeuB type 1 subfamily. In terms of assembly, homodimer. Mg(2+) is required as a cofactor. Mn(2+) serves as cofactor.

It is found in the cytoplasm. It catalyses the reaction (2R,3S)-3-isopropylmalate + NAD(+) = 4-methyl-2-oxopentanoate + CO2 + NADH. It participates in amino-acid biosynthesis; L-leucine biosynthesis; L-leucine from 3-methyl-2-oxobutanoate: step 3/4. Functionally, catalyzes the oxidation of 3-carboxy-2-hydroxy-4-methylpentanoate (3-isopropylmalate) to 3-carboxy-4-methyl-2-oxopentanoate. The product decarboxylates to 4-methyl-2 oxopentanoate. In Prochlorococcus marinus (strain SARG / CCMP1375 / SS120), this protein is 3-isopropylmalate dehydrogenase.